A 211-amino-acid polypeptide reads, in one-letter code: Uridine kinase (211 aa).

Residue 15 to 22 (GGSGSGKT) coordinates ATP.

The protein belongs to the uridine kinase family.

The protein resides in the cytoplasm. The enzyme catalyses uridine + ATP = UMP + ADP + H(+). It catalyses the reaction cytidine + ATP = CMP + ADP + H(+). The protein operates within pyrimidine metabolism; CTP biosynthesis via salvage pathway; CTP from cytidine: step 1/3. It participates in pyrimidine metabolism; UMP biosynthesis via salvage pathway; UMP from uridine: step 1/1. This is Uridine kinase from Latilactobacillus sakei subsp. sakei (strain 23K) (Lactobacillus sakei subsp. sakei).